The sequence spans 546 residues: Pectinesterase 1 (546 aa).

A signal peptide spans 1-39 (MANPQQPLLIKTHKQNPIISFKILSFVITLFVALFLVAP). Residues 40-229 (YQVEIKHSNL…RKLMESSGKD (190 aa)) constitute a propeptide that is removed on maturation. Substrate contacts are provided by T308 and Q338. A disulfide bridge links C327 with C354. D361 serves as the catalytic Proton donor. D382 (nucleophile) is an active-site residue. C395 and C429 form a disulfide bridge. Residues R450 and W452 each coordinate substrate.

This sequence in the N-terminal section; belongs to the PMEI family. The protein in the C-terminal section; belongs to the pectinesterase family.

It is found in the secreted. The protein resides in the cell wall. The catalysed reaction is [(1-&gt;4)-alpha-D-galacturonosyl methyl ester](n) + n H2O = [(1-&gt;4)-alpha-D-galacturonosyl](n) + n methanol + n H(+). The protein operates within glycan metabolism; pectin degradation; 2-dehydro-3-deoxy-D-gluconate from pectin: step 1/5. Its function is as follows. Pectinesterase may play a role in cell wall metabolism during fruit growth and development prior to ripening and may be required for preparing cell walls for softening by polygalacturonase during fruit ripening. This Solanum lycopersicum (Tomato) protein is Pectinesterase 1 (PME1.9).